The following is a 260-amino-acid chain: Phosphate import ATP-binding protein PstB 1 (260 aa).

Positions 8-255 (TETKNVYDVL…PEHKRTEDYV (248 aa)) constitute an ABC transporter domain. 46–53 (GPSGCGKS) contributes to the ATP binding site.

Belongs to the ABC transporter superfamily. Phosphate importer (TC 3.A.1.7) family. In terms of assembly, the complex is composed of two ATP-binding proteins (PstB), two transmembrane proteins (PstC and PstA) and a solute-binding protein (PstS).

The protein resides in the cell membrane. It catalyses the reaction phosphate(out) + ATP + H2O = ADP + 2 phosphate(in) + H(+). Functionally, part of the ABC transporter complex PstSACB involved in phosphate import. Responsible for energy coupling to the transport system. This chain is Phosphate import ATP-binding protein PstB 1, found in Shouchella clausii (strain KSM-K16) (Alkalihalobacillus clausii).